A 279-amino-acid chain; its full sequence is Uroplakin-3b (279 aa).

The first 26 residues, Met1–Thr26, serve as a signal peptide directing secretion. Residues Leu27–Asp200 lie on the Lumenal side of the membrane. Asn77 is a glycosylation site (N-linked (GlcNAc...) asparagine). A helical membrane pass occupies residues Met201 to Ala221. The Cytoplasmic portion of the chain corresponds to Ala222–Pro279.

The protein belongs to the uroplakin-3 family. As to quaternary structure, heterodimer with uroplakin-1B (UPK1B). In terms of tissue distribution, expression is urothelium-specific.

The protein resides in the cell membrane. Functionally, component of the asymmetric unit membrane (AUM); a highly specialized biomembrane elaborated by terminally differentiated urothelial cells. May play an important role in AUM-cytoskeleton interaction in terminally differentiated urothelial cells. It also contributes to the formation of urothelial glycocalyx which may play an important role in preventing bacterial adherence. This chain is Uroplakin-3b (UPK3B), found in Bos taurus (Bovine).